A 564-amino-acid polypeptide reads, in one-letter code: 4-coumarate--CoA ligase 1 (564 aa).

Ser-209, Ser-210, Gly-211, Thr-212, Thr-213, and Lys-217 together coordinate ATP. Tyr-259 and Thr-263 together coordinate (E)-4-coumaroyl-AMP. Arg-280 serves as a coordination point for CoA. Residues 282-351 are SBD1; it reads DLAAMMDLVE…AKLPGAVLGQ (70 aa). (E)-4-coumaroyl-AMP is bound by residues Ala-329, Gln-351, Gly-352, Thr-356, and Met-364. Gln-351, Gly-352, and Thr-356 together coordinate ATP. Residues 352-419 are SBD2; that stretch reads GYGMTEAGPV…IRGQQIMKGY (68 aa). 2 residues coordinate ATP: Asp-440 and Arg-455. Residues Lys-457 and Lys-461 each coordinate (E)-4-coumaroyl-AMP. Residues Arg-463 and Gly-464 each coordinate CoA. Residue Lys-547 participates in ATP binding.

The protein belongs to the ATP-dependent AMP-binding enzyme family. Mg(2+) serves as cofactor. As to expression, expressed in roots, stems, leaf blades and leaf sheaths.

It catalyses the reaction (E)-ferulate + ATP + CoA = (E)-feruloyl-CoA + AMP + diphosphate. The enzyme catalyses (E)-4-coumarate + ATP + CoA = (E)-4-coumaroyl-CoA + AMP + diphosphate. The catalysed reaction is (E)-cinnamate + ATP + CoA = (E)-cinnamoyl-CoA + AMP + diphosphate. It carries out the reaction (E)-caffeate + ATP + CoA = (E)-caffeoyl-CoA + AMP + diphosphate. It catalyses the reaction (E)-ferulate + ATP + H(+) = (E)-feruloyl-AMP + diphosphate. The enzyme catalyses (E)-feruloyl-AMP + CoA = (E)-feruloyl-CoA + AMP + H(+). The catalysed reaction is (E)-4-coumarate + ATP + H(+) = (E)-4-coumaroyl-AMP + diphosphate. It carries out the reaction (E)-4-coumaroyl-AMP + CoA = (E)-4-coumaroyl-CoA + AMP + H(+). It catalyses the reaction (E)-caffeate + ATP + H(+) = (E)-caffeoyl-AMP + diphosphate. The enzyme catalyses (E)-caffeoyl-AMP + CoA = (E)-caffeoyl-CoA + AMP + H(+). It functions in the pathway phytoalexin biosynthesis; 3,4',5-trihydroxystilbene biosynthesis; 3,4',5-trihydroxystilbene from trans-4-coumarate: step 1/2. In terms of biological role, involved in the phenylpropanoid metabolism by mediating the activation of a number of hydroxycinnamates for the biosynthesis of monolignols and other phenolic secondary metabolites. Catalyzes the formation of CoA esters of cinnamate, 4-coumarate, caffeate and ferulate. Is more efficient with substrates in the following order: ferulate &gt; 4-coumarate &gt; cinnamate &gt; caffeate. Cannot convert sinapate to its corresponding CoA ester. Follows a two-step reaction mechanism, wherein the carboxylate substrate first undergoes adenylation by ATP, followed by a thioesterification in the presence of CoA to yield the final CoA thioester. This chain is 4-coumarate--CoA ligase 1, found in Oryza sativa subsp. japonica (Rice).